The following is a 1196-amino-acid chain: DNA-directed RNA polymerase subunit 2 (1196 aa).

The tract at residues 1074 to 1095 (SRARGPTQLLTRQAPEGRSRDG) is disordered. The C4-type zinc finger occupies 1133 to 1154 (CDSCGQFAHKVPEKKYYTCTGC).

This sequence belongs to the RNA polymerase beta chain family.

It localises to the virion. It catalyses the reaction RNA(n) + a ribonucleoside 5'-triphosphate = RNA(n+1) + diphosphate. DNA-dependent RNA polymerase catalyzes the transcription of DNA into RNA using the four ribonucleoside triphosphates as substrates. This is DNA-directed RNA polymerase subunit 2 (RPO2) from Acanthamoeba polyphaga mimivirus (APMV).